Reading from the N-terminus, the 117-residue chain is Ubiquitin-like protein pmt3/smt3 (117 aa).

The disordered stretch occupies residues 1-37; the sequence is MSESPSANISDADKSAITPTTGDTSQQDVKPSTEHIN. Residues 17 to 30 are compositionally biased toward polar residues; it reads ITPTTGDTSQQDVK. The region spanning 35-115 is the Ubiquitin-like domain; sequence HINLKVVGQD…LEQLGGCTHL (81 aa). Gly111 is covalently cross-linked (Glycyl lysine isopeptide (Gly-Lys) (interchain with K-? in acceptor proteins)). The propeptide occupies 112 to 117; sequence CTHLCL.

The protein belongs to the ubiquitin family. SUMO subfamily. Interacts with rfp1.

The protein resides in the nucleus. Required for chromosome segregation where it may be involved in microtubule assembly. Loss of smt3 leads to an increase in telomere length. The polypeptide is Ubiquitin-like protein pmt3/smt3 (pmt3) (Schizosaccharomyces pombe (strain 972 / ATCC 24843) (Fission yeast)).